The sequence spans 84 residues: Small ribosomal subunit protein bS18 (84 aa).

It belongs to the bacterial ribosomal protein bS18 family. In terms of assembly, part of the 30S ribosomal subunit. Forms a tight heterodimer with protein bS6.

Binds as a heterodimer with protein bS6 to the central domain of the 16S rRNA, where it helps stabilize the platform of the 30S subunit. The sequence is that of Small ribosomal subunit protein bS18 from Methylorubrum extorquens (strain CM4 / NCIMB 13688) (Methylobacterium extorquens).